Reading from the N-terminus, the 78-residue chain is UPF0335 protein A1C_00850 (78 aa).

This sequence belongs to the UPF0335 family.

The protein is UPF0335 protein A1C_00850 of Rickettsia akari (strain Hartford).